A 226-amino-acid chain; its full sequence is UPF0173 metal-dependent hydrolase Dgeo_0136 (226 aa).

Belongs to the UPF0173 family.

The sequence is that of UPF0173 metal-dependent hydrolase Dgeo_0136 from Deinococcus geothermalis (strain DSM 11300 / CIP 105573 / AG-3a).